Consider the following 200-residue polypeptide: Protein Rv0461 (200 aa).

Residues 47 to 67 (DRAGKSWPGSTPKPQEDPVGV) are disordered. 3 helical membrane passes run 102 to 122 (FVLVVLGVWIGAGEVGLSLFY), 134 to 154 (VFVVLVYVVACTVGGLILALV), and 159 to 179 (LITALSLGVMSGPFASVAAAA).

The protein localises to the cell membrane. This Mycobacterium tuberculosis (strain ATCC 25618 / H37Rv) protein is Protein Rv0461.